The sequence spans 374 residues: MGEIIHRSKTRPVRVGPLTIGGSNEVIIQSMTTTKTHDVEATVAQIHRLEEAGCQIVRVACPDERAAEAIPEIKKRINIPLVADIHFDYKLALKAIEGGVDKIRINPGNIGRREKVEAVVKAAKERGVPIRIGVNAGSLEKRILEKYGYPTADGMVESALYHIRILEELDFHDIIVSLKASDVRLAIEAYEKAARTFDYPLHVGITEAGTLFSGTIKSAVGLGAILSKGIGNTIRVSLSADPVEEVKVAREILKTFGLASNAATLISCPTCGRIEIDLIRIANEIEDYIAKIQAPIKVAVLGCAVNGPGEAREADIGIAGARGEGLLFRHGKIVRKVPEEQMVEELKKEIDKLAEEYFAKQKENKAALKGSAAQ.

4 residues coordinate [4Fe-4S] cluster: C268, C271, C303, and E310.

It belongs to the IspG family. It depends on [4Fe-4S] cluster as a cofactor.

The enzyme catalyses (2E)-4-hydroxy-3-methylbut-2-enyl diphosphate + oxidized [flavodoxin] + H2O + 2 H(+) = 2-C-methyl-D-erythritol 2,4-cyclic diphosphate + reduced [flavodoxin]. It participates in isoprenoid biosynthesis; isopentenyl diphosphate biosynthesis via DXP pathway; isopentenyl diphosphate from 1-deoxy-D-xylulose 5-phosphate: step 5/6. Converts 2C-methyl-D-erythritol 2,4-cyclodiphosphate (ME-2,4cPP) into 1-hydroxy-2-methyl-2-(E)-butenyl 4-diphosphate. The sequence is that of 4-hydroxy-3-methylbut-2-en-1-yl diphosphate synthase (flavodoxin) from Geobacillus kaustophilus (strain HTA426).